A 422-amino-acid polypeptide reads, in one-letter code: MSILRSPFRLIRSPARFFPSLFHSSCNQSFTNGLKHQSTSSKAMPVSAFYIPSFNLFGKGCLAEAAKQIKMSGFKNTLIVTDPGIIKVGLYDKVKALLEEQSITVHLYDGVQPNPTVGNVNQGLEIVKKENCDSMVSIGGGSAHDCAKGIALLATNGGKIADYEGVDKSSKPQLPLIAINTTAGTASEMTRFAIITEETRHIKMAIIDKHTMPILSVNDPETMYGLPPSLTAATGMDALTHAVEAYVSTAANPITDACAVKCIELVNKYLKRAVDNGKDEEARDNMAYAEFLGGMAFNNASLGYVHAMAHQLGGFYGIPHGVCNAVLLAHVQKFNSRDPRANARLGDIAFHLGCEEHTAEAALDRISQLVLEVKIRPHLVDLGVKEKDFDVLVDHAMKDACGATNPIQPTHDEVKAIFKSAM.

The transit peptide at 1–29 (MSILRSPFRLIRSPARFFPSLFHSSCNQS) directs the protein to the mitochondrion. NAD(+)-binding residues include Asp82, Asn114, Gly141, Ser142, Thr181, Thr182, Thr190, Phe192, Lys203, and Gly225. Positions 237, 241, and 306 each coordinate Fe(2+). 2 residues coordinate NAD(+): His310 and His320. His320 contacts Fe(2+).

This sequence belongs to the iron-containing alcohol dehydrogenase family. Zn(2+) is required as a cofactor.

Its subcellular location is the mitochondrion matrix. It carries out the reaction a primary alcohol + NAD(+) = an aldehyde + NADH + H(+). It catalyses the reaction a secondary alcohol + NAD(+) = a ketone + NADH + H(+). The enzyme catalyses ethanol + NAD(+) = acetaldehyde + NADH + H(+). In terms of biological role, involved in ethanol oxidation in mitochondria. This is Alcohol dehydrogenase 4 (adh4) from Schizosaccharomyces pombe (strain 972 / ATCC 24843) (Fission yeast).